Here is a 209-residue protein sequence, read N- to C-terminus: UPF0319 protein VF_1616 (209 aa).

The signal sequence occupies residues 1-21 (MKIQSIFAASFCLLSSISAHA).

This sequence belongs to the UPF0319 family.

The polypeptide is UPF0319 protein VF_1616 (Aliivibrio fischeri (strain ATCC 700601 / ES114) (Vibrio fischeri)).